Here is an 80-residue protein sequence, read N- to C-terminus: Acyl carrier protein (80 aa).

One can recognise a Carrier domain in the interval 2–77; that stretch reads KNIEERIKKI…KSIDFIQKKN (76 aa). Ser-37 bears the O-(pantetheine 4'-phosphoryl)serine mark.

The protein belongs to the acyl carrier protein (ACP) family. Post-translationally, 4'-phosphopantetheine is transferred from CoA to a specific serine of apo-ACP by AcpS. This modification is essential for activity because fatty acids are bound in thioester linkage to the sulfhydryl of the prosthetic group.

It localises to the cytoplasm. It functions in the pathway lipid metabolism; fatty acid biosynthesis. Its function is as follows. Carrier of the growing fatty acid chain in fatty acid biosynthesis. This Buchnera aphidicola subsp. Acyrthosiphon pisum (strain APS) (Acyrthosiphon pisum symbiotic bacterium) protein is Acyl carrier protein.